Consider the following 131-residue polypeptide: Transcription antitermination protein NusB (131 aa).

This sequence belongs to the NusB family.

Its function is as follows. Involved in transcription antitermination. Required for transcription of ribosomal RNA (rRNA) genes. Binds specifically to the boxA antiterminator sequence of the ribosomal RNA (rrn) operons. This chain is Transcription antitermination protein NusB, found in Bacillus pumilus (strain SAFR-032).